A 455-amino-acid chain; its full sequence is UDP-N-acetylmuramoylalanine--D-glutamate ligase (455 aa).

An ATP-binding site is contributed by 117-123 (GTNGKTT).

This sequence belongs to the MurCDEF family.

It is found in the cytoplasm. The catalysed reaction is UDP-N-acetyl-alpha-D-muramoyl-L-alanine + D-glutamate + ATP = UDP-N-acetyl-alpha-D-muramoyl-L-alanyl-D-glutamate + ADP + phosphate + H(+). It functions in the pathway cell wall biogenesis; peptidoglycan biosynthesis. In terms of biological role, cell wall formation. Catalyzes the addition of glutamate to the nucleotide precursor UDP-N-acetylmuramoyl-L-alanine (UMA). The protein is UDP-N-acetylmuramoylalanine--D-glutamate ligase of Pelotomaculum thermopropionicum (strain DSM 13744 / JCM 10971 / SI).